The chain runs to 57 residues: Large ribosomal subunit protein bL33 (57 aa).

Belongs to the bacterial ribosomal protein bL33 family.

The sequence is that of Large ribosomal subunit protein bL33 from Shewanella sp. (strain MR-4).